We begin with the raw amino-acid sequence, 227 residues long: E3 ubiquitin-protein ligase ZNRF1 (227 aa).

The disordered stretch occupies residues 1 to 38 (MGGKQSTAARSRGPFPGVSTDDSAVPPPGGAPHFGHYR). A lipid anchor (N-myristoyl glycine) is attached at Gly2. Positions 2–10 (GGKQSTAAR) are required for endosomal and lysosomal localization and myristoylation. A phosphoserine mark is found at Ser50, Ser52, and Ser53. The interval 77–105 (RGAGDAERAPGSGGSASDSTYAHGNGYQE) is disordered. Phosphotyrosine is present on Tyr103. Position 123 is a phosphoserine (Ser123). The segment at 184-225 (CVICLEELLQGDTIARLPCLCIYHKSCIDSWFEVNRSCPEHP) adopts an RING-type; atypical zinc-finger fold.

Interacts with AKT1, GLUL and TUBB2A. Interacts with ZNRF2. Interacts (via its RING domain) with UBE2N. Interacts (when phosphorylated) with YWHAE. Post-translationally, N-myristoylation targets ZNRF1 to intracellular membranes. In terms of processing, phosphorylated by SRC at Tyr-103; leading to 'Lys-63'-linked ubiquitination of TLR3, lysosomal trafficking and degradation.

It localises to the endosome. The protein localises to the lysosome. Its subcellular location is the membrane. It is found in the cytoplasmic vesicle. The protein resides in the secretory vesicle. It localises to the synaptic vesicle membrane. It carries out the reaction S-ubiquitinyl-[E2 ubiquitin-conjugating enzyme]-L-cysteine + [acceptor protein]-L-lysine = [E2 ubiquitin-conjugating enzyme]-L-cysteine + N(6)-ubiquitinyl-[acceptor protein]-L-lysine.. The protein operates within protein modification; protein ubiquitination. Its function is as follows. E3 ubiquitin-protein ligase that plays a role in different processes including cell differentiation, receptor recycling or regulation of inflammation. Mediates the ubiquitination of AKT1 and GLUL, thereby playing a role in neuron cells differentiation. Plays a role in the establishment and maintenance of neuronal transmission and plasticity. Regulates Schwann cells differentiation by mediating ubiquitination of GLUL. Promotes neurodegeneration by mediating 'Lys-48'-linked polyubiquitination and subsequent degradation of AKT1 in axons: degradation of AKT1 prevents AKT1-mediated phosphorylation of GSK3B, leading to GSK3B activation and phosphorylation of DPYSL2/CRMP2 followed by destabilization of microtubule assembly in axons. Ubiquitinates the Na(+)/K(+) ATPase alpha-1 subunit/ATP1A1 and thereby influences its endocytosis and/or degradation. Controls ligand-induced EGFR signaling via mediating receptor ubiquitination and recruitment of the ESCRT machinery. Acts as a negative feedback mechanism controlling TLR3 trafficking by mediating TLR3 'Lys-63'-linked polyubiquitination to reduce type I IFN production. Modulates inflammation by promoting caveolin-1/CAV1 ubiquitination and degradation to regulate TLR4-activated immune response. The polypeptide is E3 ubiquitin-protein ligase ZNRF1 (ZNRF1) (Bos taurus (Bovine)).